A 429-amino-acid chain; its full sequence is UDP-glucuronate 4-epimerase 1 (429 aa).

Helical transmembrane passes span 36–56 and 87–107; these read FLWA…QSFV and GISV…SLAL. 89–120 is an NAD(+) binding site; the sequence is SVLVTGATGFVGSHVSLALRKRGDGVVGLDNF. Tyrosine 239 (proton acceptor) is an active-site residue.

The protein belongs to the NAD(P)-dependent epimerase/dehydratase family. In terms of assembly, homodimer. As to expression, in root stele, leaves, siliques, flowers, pollen and stems.

The protein localises to the golgi apparatus. It localises to the golgi stack membrane. The catalysed reaction is UDP-alpha-D-glucuronate = UDP-alpha-D-galacturonate. Inhibited by UDP-Xylose. In terms of biological role, UDP-D-glucuronate 4-epimerase involved in the synthesis of the negatively charged monosaccharide that forms the backbone of pectic cell wall components. The sequence is that of UDP-glucuronate 4-epimerase 1 (GAE1) from Arabidopsis thaliana (Mouse-ear cress).